A 212-amino-acid polypeptide reads, in one-letter code: Probable transaldolase (212 aa).

K83 serves as the catalytic Schiff-base intermediate with substrate.

Belongs to the transaldolase family. Type 3B subfamily.

It localises to the cytoplasm. It catalyses the reaction D-sedoheptulose 7-phosphate + D-glyceraldehyde 3-phosphate = D-erythrose 4-phosphate + beta-D-fructose 6-phosphate. It participates in carbohydrate degradation; pentose phosphate pathway; D-glyceraldehyde 3-phosphate and beta-D-fructose 6-phosphate from D-ribose 5-phosphate and D-xylulose 5-phosphate (non-oxidative stage): step 2/3. Transaldolase is important for the balance of metabolites in the pentose-phosphate pathway. This chain is Probable transaldolase (tal), found in Halalkalibacterium halodurans (strain ATCC BAA-125 / DSM 18197 / FERM 7344 / JCM 9153 / C-125) (Bacillus halodurans).